Consider the following 108-residue polypeptide: MTLGQQAESLAQGYLEQQGLTFVERNVRYPFGEIDLIMRHKHHWVFVEVKYRSANQFGGAIQALSKAQIGRIRMAASHYLQTHKLDVPCRFDVVAIEDAQIHWLVDAF.

The protein belongs to the UPF0102 family.

In Shewanella sp. (strain MR-4), this protein is UPF0102 protein Shewmr4_3685.